A 305-amino-acid chain; its full sequence is Myb-like transcriptional regulator basR (305 aa).

3 consecutive Myb-like domains span residues 5–59 (RRRW…YNRF), 60–110 (TGGL…HHCL), and 111–162 (NPEL…TILS). The disordered stretch occupies residues 175–215 (PCCDSPSPSKSSRRPPSTPTSTPQVPGSRQGSSYDPYDYGS). The span at 198–207 (QVPGSRQGSS) shows a compositional bias: polar residues.

The protein localises to the nucleus. In terms of biological role, transcription regulator that acts as a central regulatory node for the integration of external bacterial signals leading to the regulation of secondary metabolite gene clusters such as orsellinic, lecanoric acid, cichorine, 2,4-dihydroxy-3-methyl-6-(2-oxopropyl)benzaldehyde (dba), emericellamide or microperfuranone clusters. This is Myb-like transcriptional regulator basR from Emericella nidulans (strain FGSC A4 / ATCC 38163 / CBS 112.46 / NRRL 194 / M139) (Aspergillus nidulans).